The primary structure comprises 114 residues: MQDNSIFKNIIQRKIPANIVYQDKKITAFEDIKPKAPVHILIIPNFFISSSNDINKKNKWIMSHMFYIAVKIAKQKKINQEGYRIIINCNEYGGQEINYLHMHLLGGKKLKSFS.

One can recognise an HIT domain in the interval 6–114; the sequence is IFKNIIQRKI…LGGKKLKSFS (109 aa).

This is an uncharacterized protein from Buchnera aphidicola subsp. Acyrthosiphon pisum (strain APS) (Acyrthosiphon pisum symbiotic bacterium).